The sequence spans 172 residues: Protein-export protein SecB (172 aa).

Belongs to the SecB family. As to quaternary structure, homotetramer, a dimer of dimers. One homotetramer interacts with 1 SecA dimer.

It localises to the cytoplasm. Its function is as follows. One of the proteins required for the normal export of preproteins out of the cell cytoplasm. It is a molecular chaperone that binds to a subset of precursor proteins, maintaining them in a translocation-competent state. It also specifically binds to its receptor SecA. The polypeptide is Protein-export protein SecB (Stenotrophomonas maltophilia (strain K279a)).